Here is a 372-residue protein sequence, read N- to C-terminus: N-methyl-L-tryptophan oxidase (372 aa).

Asp4–His34 lines the FAD pocket. Cys307 carries the S-8alpha-FAD cysteine modification.

This sequence belongs to the MSOX/MTOX family. MTOX subfamily. Monomer. Requires FAD as cofactor.

It catalyses the reaction N(alpha)-methyl-L-tryptophan + O2 + H2O = L-tryptophan + formaldehyde + H2O2. In terms of biological role, catalyzes the oxidative demethylation of N-methyl-L-tryptophan. In Salmonella typhimurium (strain LT2 / SGSC1412 / ATCC 700720), this protein is N-methyl-L-tryptophan oxidase.